The sequence spans 126 residues: Large ribosomal subunit protein bL12 (126 aa).

The protein belongs to the bacterial ribosomal protein bL12 family. In terms of assembly, homodimer. Part of the ribosomal stalk of the 50S ribosomal subunit. Forms a multimeric L10(L12)X complex, where L10 forms an elongated spine to which 2 to 4 L12 dimers bind in a sequential fashion. Binds GTP-bound translation factors.

Its function is as follows. Forms part of the ribosomal stalk which helps the ribosome interact with GTP-bound translation factors. Is thus essential for accurate translation. This Streptococcus pyogenes serotype M28 (strain MGAS6180) protein is Large ribosomal subunit protein bL12.